Reading from the N-terminus, the 177-residue chain is Large ribosomal subunit protein bL9 (177 aa).

Positions Glu-151 to Ala-177 are disordered. The span at Glu-157 to Glu-167 shows a compositional bias: low complexity. Residues Ala-168–Ala-177 show a composition bias toward basic and acidic residues.

Belongs to the bacterial ribosomal protein bL9 family.

Binds to the 23S rRNA. The protein is Large ribosomal subunit protein bL9 of Solidesulfovibrio magneticus (strain ATCC 700980 / DSM 13731 / RS-1) (Desulfovibrio magneticus).